The following is a 223-amino-acid chain: GTP cyclohydrolase 1 (223 aa).

Residues Cys114, His117, and Cys185 each coordinate Zn(2+).

It belongs to the GTP cyclohydrolase I family. In terms of assembly, homomer.

The enzyme catalyses GTP + H2O = 7,8-dihydroneopterin 3'-triphosphate + formate + H(+). It participates in cofactor biosynthesis; 7,8-dihydroneopterin triphosphate biosynthesis; 7,8-dihydroneopterin triphosphate from GTP: step 1/1. In Chlorobium chlorochromatii (strain CaD3), this protein is GTP cyclohydrolase 1.